The chain runs to 704 residues: MIKLILSIILIICFIINSIESFKMITLTTGPPSDLGWNNMINLGRIGVTKAMDIEDSRLFVVSGRNDTYELLLPIIQNDDIDLVICSSLDHGDACKEIAAMYVNSTEIKTQFLVRGSGATTKNLIQFTYNYASVNYLSGMFAGLQTKTNKIGFISPGITAGASDCFVYAFWLGAKSVNPNIKFYYYNIGSYLDKDKTKGAAENLIDVYDCDVIGDTLDDFTASNVAISRGRYAIGTNGFPQRDVYGENVVYTYAYNWTKYFVPIASAVKNKIPPSKWYADFNKDNNLSLYDLSFGFQVSAETKFKIINQTKSFASYVRTLHPYFCNEYMEGYTQKYNLTRQPNTTNCITTTGFIGIDAPVGDMNYLGNYTIKFSKVEFQRSIQIGFSIVSGLLIGFVILMMIGIVKYQDTPSIRSASPSFLNLTLLGGVIIFIGIIVWVAPISTHQCNARFWLVTIGFSTLIGSLVVKNIRIWLIFDNPELKIRTITNNQLYPWVGLCLVINIVLMSIITTVGDLKAIEAQGIDSLGKFEYMTICKMNYTGAATLYSILAYFGTLLLVGVFVSWKIRIVHIEEFSECTAIAKTLYSISFCLFVIVPLMISPQDKQSETIILCVTGIFITTGALLIFFLPKFWRIFGNEKQGSHEHFTQRKQSAVASARAESANRNNSSNSFGFSKSSAQIGNTISGIESLNDDSNESSLSNETK.

The N-terminal stretch at 1–21 (MIKLILSIILIICFIINSIES) is a signal peptide. Over 22-383 (FKMITLTTGP…SKVEFQRSIQ (362 aa)) the chain is Extracellular. 8 N-linked (GlcNAc...) asparagine glycosylation sites follow: Asn-66, Asn-104, Asn-256, Asn-286, Asn-308, Asn-337, Asn-343, and Asn-368. A helical transmembrane segment spans residues 384-404 (IGFSIVSGLLIGFVILMMIGI). At 405–419 (VKYQDTPSIRSASPS) the chain is on the cytoplasmic side. The chain crosses the membrane as a helical span at residues 420 to 440 (FLNLTLLGGVIIFIGIIVWVA). At 441–455 (PISTHQCNARFWLVT) the chain is on the extracellular side. The chain crosses the membrane as a helical span at residues 456–476 (IGFSTLIGSLVVKNIRIWLIF). At 477–492 (DNPELKIRTITNNQLY) the chain is on the cytoplasmic side. Residues 493-513 (PWVGLCLVINIVLMSIITTVG) form a helical membrane-spanning segment. The Extracellular portion of the chain corresponds to 514 to 541 (DLKAIEAQGIDSLGKFEYMTICKMNYTG). The N-linked (GlcNAc...) asparagine glycan is linked to Asn-538. A helical membrane pass occupies residues 542 to 562 (AATLYSILAYFGTLLLVGVFV). Residues 563-578 (SWKIRIVHIEEFSECT) lie on the Cytoplasmic side of the membrane. The helical transmembrane segment at 579–599 (AIAKTLYSISFCLFVIVPLMI) threads the bilayer. Over 600 to 608 (SPQDKQSET) the chain is Extracellular. The chain crosses the membrane as a helical span at residues 609–629 (IILCVTGIFITTGALLIFFLP). Topologically, residues 630 to 704 (KFWRIFGNEK…NESSLSNETK (75 aa)) are cytoplasmic. Disordered regions lie at residues 657–677 (ARAE…SKSS) and 685–704 (SGIE…NETK).

This sequence in the N-terminal section; belongs to the BMP lipoprotein family. In the C-terminal section; belongs to the G-protein coupled receptor 3 family. GABA-B receptor subfamily.

The protein resides in the membrane. This chain is Metabotropic glutamate receptor-like protein K (grlK), found in Dictyostelium discoideum (Social amoeba).